The primary structure comprises 567 residues: Pyruvate decarboxylase (567 aa).

Residues D28 and H117 each contribute to the pyruvate site. Thiamine diphosphate contacts are provided by residues T393 and 416-418; that span reads GSI. A Mg(2+)-binding site is contributed by D447. Residues 448 to 449 and 475 to 480 contribute to the thiamine diphosphate site; these read GS and NDGYTI. Mg(2+) contacts are provided by N475 and G477. E481 serves as a coordination point for pyruvate.

It belongs to the TPP enzyme family. Homotetramer. The cofactor is Mg(2+). It depends on thiamine diphosphate as a cofactor.

Its subcellular location is the cytoplasm. It catalyses the reaction a 2-oxocarboxylate + H(+) = an aldehyde + CO2. It carries out the reaction pyruvate + H(+) = acetaldehyde + CO2. The polypeptide is Pyruvate decarboxylase (PDC11) (Candida albicans (strain SC5314 / ATCC MYA-2876) (Yeast)).